The primary structure comprises 280 residues: Beta-glucosyl-HMC-alpha-glucosyl-transferase (280 aa).

Its pathway is genetic information processing; DNA modification. In terms of biological role, transfers a gentiobiosyl-group on a hydroxymethylcytosine residue in DNA. Is involved in a DNA modification process to protects the phage genome against its own nucleases and the host restriction endonuclease system. The sequence is that of Beta-glucosyl-HMC-alpha-glucosyl-transferase from Enterobacteria phage T2 (Bacteriophage T2).